The following is a 69-amino-acid chain: U2-agatoxin-Ao1g (69 aa).

Positions 1–20 (MKAIISLLLISAMVFSMIEA) are cleaved as a signal peptide. Residues 21 to 34 (VPVEEGLQLFEGER) constitute a propeptide that is removed on maturation. 3 disulfide bridges follow: Cys36/Cys52, Cys43/Cys57, and Cys51/Cys67. Leu68 carries the post-translational modification Leucine amide.

Belongs to the neurotoxin 01 (U2-agtx) family. In terms of tissue distribution, expressed by the venom gland.

The protein localises to the secreted. Its function is as follows. Insect active toxin causing rapid but reversible paralysis in crickets. No activity shown in mammals. Does not show effect on mammalian voltage-gated calcium channels. This chain is U2-agatoxin-Ao1g, found in Agelena orientalis (Funnel-web spider).